We begin with the raw amino-acid sequence, 463 residues long: Probable ECA polymerase (463 aa).

11 helical membrane passes run 6–26 (FGGLFVVYLISVIFILSLTWM), 39–59 (FSLLYLLTFYFGFPFTCVLVF), 65–85 (VVPVQFLLQAMLSATAFYAIY), 112–132 (ANLTWLLLALIAVATVGIFFL), 154–174 (GVALKRFFYFFIPAMLVVYFL), 180–200 (AWLMFLIGTVAFGMLTYVIVG), 201–221 (GTRANLIIAFALFLFIGIVRG), 222–242 (WITLWMLVAAGAFGIVGMFWL), 340–360 (LVVMGGVLFIPLGAIAVGLVI), 377–397 (YKAAILQAFCFGAVFNIIVLT), and 408–428 (VVFFCLVFGLCLLVAKLLYWL).

The protein belongs to the WzyE family. As to quaternary structure, probably part of a complex composed of WzxE, WzyE and WzzE.

It is found in the cell inner membrane. It participates in bacterial outer membrane biogenesis; enterobacterial common antigen biosynthesis. Probably involved in the polymerization of enterobacterial common antigen (ECA) trisaccharide repeat units. The chain is Probable ECA polymerase from Pectobacterium carotovorum subsp. carotovorum (strain PC1).